Consider the following 92-residue polypeptide: Protein RnfH (92 aa).

This sequence belongs to the UPF0125 (RnfH) family.

The protein is Protein RnfH of Neisseria gonorrhoeae (strain NCCP11945).